Reading from the N-terminus, the 388-residue chain is GTPase Obg (388 aa).

An Obg domain is found at 4 to 162 (SNFVDYVKIY…MTVIMELKLL (159 aa)). Residues 163–329 (ADVGLVGFPN…LKDILWEELN (167 aa)) enclose the OBG-type G domain. GTP-binding positions include 169-176 (GFPNAGKS), 194-198 (FTTLE), 216-219 (DIPG), 283-286 (TKSD), and 310-312 (SSV). Serine 176 and threonine 196 together coordinate Mg(2+). Positions 352–388 (LKDMGEDEELDYEYEEDADDEDDDLDYEYEEEDWEEK) are disordered. The segment covering 356 to 388 (GEDEELDYEYEEDADDEDDDLDYEYEEEDWEEK) has biased composition (acidic residues).

It belongs to the TRAFAC class OBG-HflX-like GTPase superfamily. OBG GTPase family. As to quaternary structure, monomer. It depends on Mg(2+) as a cofactor.

The protein resides in the cytoplasm. Functionally, an essential GTPase which binds GTP, GDP and possibly (p)ppGpp with moderate affinity, with high nucleotide exchange rates and a fairly low GTP hydrolysis rate. Plays a role in control of the cell cycle, stress response, ribosome biogenesis and in those bacteria that undergo differentiation, in morphogenesis control. The sequence is that of GTPase Obg from Bacteroides thetaiotaomicron (strain ATCC 29148 / DSM 2079 / JCM 5827 / CCUG 10774 / NCTC 10582 / VPI-5482 / E50).